We begin with the raw amino-acid sequence, 147 residues long: Putative pre-16S rRNA nuclease (147 aa).

This sequence belongs to the YqgF nuclease family.

The protein resides in the cytoplasm. Could be a nuclease involved in processing of the 5'-end of pre-16S rRNA. The polypeptide is Putative pre-16S rRNA nuclease (Acinetobacter baylyi (strain ATCC 33305 / BD413 / ADP1)).